A 356-amino-acid polypeptide reads, in one-letter code: UDP-N-acetylglucosamine--N-acetylmuramyl-(pentapeptide) pyrophosphoryl-undecaprenol N-acetylglucosamine transferase (356 aa).

Residues 12–14 (TGG), Asn124, Arg163, Ser188, Ile242, and Gln287 each bind UDP-N-acetyl-alpha-D-glucosamine.

Belongs to the glycosyltransferase 28 family. MurG subfamily.

It localises to the cell inner membrane. The catalysed reaction is di-trans,octa-cis-undecaprenyl diphospho-N-acetyl-alpha-D-muramoyl-L-alanyl-D-glutamyl-meso-2,6-diaminopimeloyl-D-alanyl-D-alanine + UDP-N-acetyl-alpha-D-glucosamine = di-trans,octa-cis-undecaprenyl diphospho-[N-acetyl-alpha-D-glucosaminyl-(1-&gt;4)]-N-acetyl-alpha-D-muramoyl-L-alanyl-D-glutamyl-meso-2,6-diaminopimeloyl-D-alanyl-D-alanine + UDP + H(+). The protein operates within cell wall biogenesis; peptidoglycan biosynthesis. Functionally, cell wall formation. Catalyzes the transfer of a GlcNAc subunit on undecaprenyl-pyrophosphoryl-MurNAc-pentapeptide (lipid intermediate I) to form undecaprenyl-pyrophosphoryl-MurNAc-(pentapeptide)GlcNAc (lipid intermediate II). The chain is UDP-N-acetylglucosamine--N-acetylmuramyl-(pentapeptide) pyrophosphoryl-undecaprenol N-acetylglucosamine transferase from Pseudomonas syringae pv. syringae (strain B728a).